The chain runs to 82 residues: RNA-binding protein GK0100 (82 aa).

It belongs to the eukaryotic ribosomal protein eL8 family.

The chain is RNA-binding protein GK0100 from Geobacillus kaustophilus (strain HTA426).